We begin with the raw amino-acid sequence, 169 residues long: Crossover junction endodeoxyribonuclease RuvC (169 aa).

Active-site residues include D11, E71, and D143. 3 residues coordinate Mg(2+): D11, E71, and D143.

This sequence belongs to the RuvC family. Homodimer which binds Holliday junction (HJ) DNA. The HJ becomes 2-fold symmetrical on binding to RuvC with unstacked arms; it has a different conformation from HJ DNA in complex with RuvA. In the full resolvosome a probable DNA-RuvA(4)-RuvB(12)-RuvC(2) complex forms which resolves the HJ. It depends on Mg(2+) as a cofactor.

It localises to the cytoplasm. It catalyses the reaction Endonucleolytic cleavage at a junction such as a reciprocal single-stranded crossover between two homologous DNA duplexes (Holliday junction).. In terms of biological role, the RuvA-RuvB-RuvC complex processes Holliday junction (HJ) DNA during genetic recombination and DNA repair. Endonuclease that resolves HJ intermediates. Cleaves cruciform DNA by making single-stranded nicks across the HJ at symmetrical positions within the homologous arms, yielding a 5'-phosphate and a 3'-hydroxyl group; requires a central core of homology in the junction. The consensus cleavage sequence is 5'-(A/T)TT(C/G)-3'. Cleavage occurs on the 3'-side of the TT dinucleotide at the point of strand exchange. HJ branch migration catalyzed by RuvA-RuvB allows RuvC to scan DNA until it finds its consensus sequence, where it cleaves and resolves the cruciform DNA. The chain is Crossover junction endodeoxyribonuclease RuvC from Rhizobium etli (strain ATCC 51251 / DSM 11541 / JCM 21823 / NBRC 15573 / CFN 42).